The chain runs to 561 residues: Glucose-6-phosphate isomerase (561 aa).

D-glucose 6-phosphate is bound by residues 171-172 (GS), 222-227 (SKTFTT), glutamine 366, glutamate 370, histidine 401, and lysine 525. Glutamate 370 serves as the catalytic Proton donor. Catalysis depends on residues histidine 401 and lysine 525.

The protein belongs to the GPI family. As to quaternary structure, homodimer.

It is found in the cytoplasm. The protein localises to the cytosol. It carries out the reaction alpha-D-glucose 6-phosphate = beta-D-fructose 6-phosphate. The protein operates within carbohydrate degradation; glycolysis; D-glyceraldehyde 3-phosphate and glycerone phosphate from D-glucose: step 2/4. In terms of biological role, in the cytoplasm, catalyzes the conversion of glucose-6-phosphate to fructose-6-phosphate, the second step in glycolysis, and the reverse reaction during gluconeogenesis. This chain is Glucose-6-phosphate isomerase (pgi-1), found in Neurospora crassa (strain ATCC 24698 / 74-OR23-1A / CBS 708.71 / DSM 1257 / FGSC 987).